A 76-amino-acid polypeptide reads, in one-letter code: UPF0291 protein BCE_1981 (76 aa).

Belongs to the UPF0291 family.

The protein localises to the cytoplasm. The polypeptide is UPF0291 protein BCE_1981 (Bacillus cereus (strain ATCC 10987 / NRS 248)).